The following is a 272-amino-acid chain: Biglycan (272 aa).

The signal sequence occupies residues 1–16 (MWPLWLLASLLALSQA). The propeptide occupies 17-37 (LPFEQKAFWDFTLDDGLPMLN). Residues Ser42 and Ser48 are each glycosylated (O-linked (Xyl...) (glycosaminoglycan) serine). The region spanning 55–91 (ALPPTFSAMCPFGCHCHLRVVQCSDLGLKAVPKEISP) is the LRRNT domain. Intrachain disulfides connect Cys64-Cys70 and Cys68-Cys77. 8 LRR repeats span residues 92–113 (DTTL…DFKG), 116–137 (HLYA…PSAP), 138–161 (DGLK…DLPE), 162–183 (TLNE…DLLR), 186–209 (KLYR…SFLP), 210–232 (TLRE…PDLK), 233–254 (LLQV…DFCP), and 255–272 (VGFG…LFNN).

The protein belongs to the small leucine-rich proteoglycan (SLRP) family. SLRP class I subfamily. Homodimer. Forms a ternary complex with MFAP2 and ELN. In terms of processing, the two attached glycosaminoglycan chains can be either chondroitin sulfate or dermatan sulfate. In terms of tissue distribution, found in several connective tissues, especially in articular cartilages.

It localises to the secreted. The protein localises to the extracellular space. It is found in the extracellular matrix. Its function is as follows. May be involved in collagen fiber assembly. In Sus scrofa (Pig), this protein is Biglycan (BGN).